Here is a 206-residue protein sequence, read N- to C-terminus: Pyridoxine/pyridoxamine 5'-phosphate oxidase (206 aa).

FMN-binding positions include 53–58 (RMVLLK), 68–69 (YT), Lys-75, and Gln-97. Residue Lys-58 coordinates substrate. Residues Tyr-115, Arg-119, and Ser-123 each coordinate substrate. FMN is bound by residues 132-133 (QS) and Trp-177. Residue 183 to 185 (RLH) coordinates substrate. Residue Arg-187 participates in FMN binding.

Belongs to the pyridoxamine 5'-phosphate oxidase family. Homodimer. Requires FMN as cofactor.

It carries out the reaction pyridoxamine 5'-phosphate + O2 + H2O = pyridoxal 5'-phosphate + H2O2 + NH4(+). The enzyme catalyses pyridoxine 5'-phosphate + O2 = pyridoxal 5'-phosphate + H2O2. It functions in the pathway cofactor metabolism; pyridoxal 5'-phosphate salvage; pyridoxal 5'-phosphate from pyridoxamine 5'-phosphate: step 1/1. Its pathway is cofactor metabolism; pyridoxal 5'-phosphate salvage; pyridoxal 5'-phosphate from pyridoxine 5'-phosphate: step 1/1. Functionally, catalyzes the oxidation of either pyridoxine 5'-phosphate (PNP) or pyridoxamine 5'-phosphate (PMP) into pyridoxal 5'-phosphate (PLP). In Sinorhizobium fredii (strain NBRC 101917 / NGR234), this protein is Pyridoxine/pyridoxamine 5'-phosphate oxidase.